Consider the following 508-residue polypeptide: ATP synthase subunit alpha (508 aa).

Residue 171 to 178 (GDRQTGKT) coordinates ATP.

It belongs to the ATPase alpha/beta chains family. F-type ATPases have 2 components, CF(1) - the catalytic core - and CF(0) - the membrane proton channel. CF(1) has five subunits: alpha(3), beta(3), gamma(1), delta(1), epsilon(1). CF(0) has three main subunits: a(1), b(2) and c(9-12). The alpha and beta chains form an alternating ring which encloses part of the gamma chain. CF(1) is attached to CF(0) by a central stalk formed by the gamma and epsilon chains, while a peripheral stalk is formed by the delta and b chains.

Its subcellular location is the cell membrane. It catalyses the reaction ATP + H2O + 4 H(+)(in) = ADP + phosphate + 5 H(+)(out). Functionally, produces ATP from ADP in the presence of a proton gradient across the membrane. The alpha chain is a regulatory subunit. The chain is ATP synthase subunit alpha from Protochlamydia amoebophila (strain UWE25).